The following is a 423-amino-acid chain: uncharacterized protein (423 aa).

The protein belongs to the asfivirus E423R family.

The protein resides in the virion. This is an uncharacterized protein from African swine fever virus (isolate Pig/Kenya/KEN-50/1950) (ASFV).